Here is a 205-residue protein sequence, read N- to C-terminus: High frequency lysogenization protein HflD homolog (205 aa).

This sequence belongs to the HflD family.

Its subcellular location is the cytoplasm. It is found in the cell inner membrane. This chain is High frequency lysogenization protein HflD homolog, found in Shewanella sp. (strain MR-7).